Here is a 360-residue protein sequence, read N- to C-terminus: A-type ATP synthase subunit C (360 aa).

The segment at 1-25 is disordered; sequence MRLLEKLWGQKPSRKSDKKKNGTSN.

Belongs to the V-ATPase V0D/AC39 subunit family. In terms of assembly, has multiple subunits with at least A(3), B(3), C, D, E, F, H, I and proteolipid K(x).

The protein localises to the cell membrane. Component of the A-type ATP synthase that produces ATP from ADP in the presence of a proton gradient across the membrane. The protein is A-type ATP synthase subunit C of Methanosarcina barkeri (strain Fusaro / DSM 804).